Here is a 261-residue protein sequence, read N- to C-terminus: Carnitinyl-CoA dehydratase (261 aa).

The Nucleophile role is filled by Glu111. The Proton acceptor role is filled by Glu131.

It belongs to the enoyl-CoA hydratase/isomerase family.

The catalysed reaction is (R)-carnitinyl-CoA = crotonobetainyl-CoA + H2O. It participates in amine and polyamine metabolism; carnitine metabolism. Catalyzes the reversible dehydration of L-carnitinyl-CoA to crotonobetainyl-CoA. The chain is Carnitinyl-CoA dehydratase from Salmonella arizonae (strain ATCC BAA-731 / CDC346-86 / RSK2980).